Reading from the N-terminus, the 206-residue chain is 2-phospho-L-lactate guanylyltransferase (206 aa).

The protein belongs to the CofC family. As to quaternary structure, homodimer.

The enzyme catalyses (2S)-2-phospholactate + GTP + H(+) = (2S)-lactyl-2-diphospho-5'-guanosine + diphosphate. It functions in the pathway cofactor biosynthesis; coenzyme F420 biosynthesis. In terms of biological role, guanylyltransferase that catalyzes the activation of (2S)-2-phospholactate (2-PL) as (2S)-lactyl-2-diphospho-5'-guanosine, via the condensation of 2-PL with GTP. It is involved in the biosynthesis of coenzyme F420, a hydride carrier cofactor. In Archaeoglobus fulgidus (strain ATCC 49558 / DSM 4304 / JCM 9628 / NBRC 100126 / VC-16), this protein is 2-phospho-L-lactate guanylyltransferase.